The following is a 66-amino-acid chain: Large ribosomal subunit protein bL33c (66 aa).

The protein belongs to the bacterial ribosomal protein bL33 family.

The protein resides in the plastid. It is found in the chloroplast. This chain is Large ribosomal subunit protein bL33c, found in Ipomoea purpurea (Common morning glory).